The primary structure comprises 265 residues: Eukaryotic translation initiation factor 3 subunit J (265 aa).

A compositionally biased stretch (acidic residues) spans 24 to 34 (AGDEPILDSWD). The tract at residues 24–74 (AGDEPILDSWDEEPKAKKEAAKPKPKPKAGGKKNAKGEEKKEQVLAIDELD) is disordered. A compositionally biased stretch (basic and acidic residues) spans 35–45 (EEPKAKKEAAK). The segment covering 46–57 (PKPKPKAGGKKN) has biased composition (basic residues). 2 coiled-coil regions span residues 78-106 (RKEL…MAEE) and 190-220 (IENI…ARVK).

Belongs to the eIF-3 subunit J family. As to quaternary structure, component of the eukaryotic translation initiation factor 3 (eIF-3) complex.

The protein localises to the cytoplasm. Component of the eukaryotic translation initiation factor 3 (eIF-3) complex, which is involved in protein synthesis of a specialized repertoire of mRNAs and, together with other initiation factors, stimulates binding of mRNA and methionyl-tRNAi to the 40S ribosome. The eIF-3 complex specifically targets and initiates translation of a subset of mRNAs involved in cell proliferation. In Candida glabrata (strain ATCC 2001 / BCRC 20586 / JCM 3761 / NBRC 0622 / NRRL Y-65 / CBS 138) (Yeast), this protein is Eukaryotic translation initiation factor 3 subunit J.